The chain runs to 415 residues: Serine hydroxymethyltransferase (415 aa).

Residues Leu117 and 121–123 (GHL) each bind (6S)-5,6,7,8-tetrahydrofolate. Position 226 is an N6-(pyridoxal phosphate)lysine (Lys226).

This sequence belongs to the SHMT family. Homodimer. Requires pyridoxal 5'-phosphate as cofactor.

The protein localises to the cytoplasm. The enzyme catalyses (6R)-5,10-methylene-5,6,7,8-tetrahydrofolate + glycine + H2O = (6S)-5,6,7,8-tetrahydrofolate + L-serine. It functions in the pathway one-carbon metabolism; tetrahydrofolate interconversion. Its pathway is amino-acid biosynthesis; glycine biosynthesis; glycine from L-serine: step 1/1. In terms of biological role, catalyzes the reversible interconversion of serine and glycine with tetrahydrofolate (THF) serving as the one-carbon carrier. This reaction serves as the major source of one-carbon groups required for the biosynthesis of purines, thymidylate, methionine, and other important biomolecules. Also exhibits THF-independent aldolase activity toward beta-hydroxyamino acids, producing glycine and aldehydes, via a retro-aldol mechanism. The chain is Serine hydroxymethyltransferase from Dehalococcoides mccartyi (strain ATCC BAA-2266 / KCTC 15142 / 195) (Dehalococcoides ethenogenes (strain 195)).